The sequence spans 62 residues: Large ribosomal subunit protein bL33 (62 aa).

It belongs to the bacterial ribosomal protein bL33 family.

The protein is Large ribosomal subunit protein bL33 of Parabacteroides distasonis (strain ATCC 8503 / DSM 20701 / CIP 104284 / JCM 5825 / NCTC 11152).